We begin with the raw amino-acid sequence, 138 residues long: Large ribosomal subunit protein uL14 (138 aa).

It belongs to the universal ribosomal protein uL14 family. Part of the 50S ribosomal subunit. Forms a cluster with proteins L3 and L24e, part of which may contact the 16S rRNA in 2 intersubunit bridges.

In terms of biological role, binds to 23S rRNA. Forms part of two intersubunit bridges in the 70S ribosome. The polypeptide is Large ribosomal subunit protein uL14 (Sulfurisphaera tokodaii (strain DSM 16993 / JCM 10545 / NBRC 100140 / 7) (Sulfolobus tokodaii)).